Here is a 1099-residue protein sequence, read N- to C-terminus: Exonuclease/helicase subunit RexB (1099 aa).

The [4Fe-4S] cluster site is built by C766, C1056, C1059, and C1065.

Belongs to the helicase family. AddB/RexB type 2 subfamily. Heterodimer of RexA (AddA) and RexB. The cofactor is Mg(2+). [4Fe-4S] cluster serves as cofactor.

Its function is as follows. The heterodimer acts both as an ATP-dependent DNA helicase and an ATP-dependent, dual-direction single-stranded exonuclease. Recognizes the L.lactis chi site (5'-GCGCGTG-3'), which stimulates homologous recombination. This subunit has 5'-&gt;3' exonuclease activity. In terms of biological role, the heterodimer acts as both an ATP-dependent DNA helicase and an ATP-dependent, dual-direction single-stranded exonuclease. Recognizes the chi site generating a DNA molecule suitable for the initiation of homologous recombination. This subunit has 5' -&gt; 3' nuclease activity but not helicase activity. In Lactococcus lactis subsp. cremoris (strain MG1363), this protein is Exonuclease/helicase subunit RexB.